A 325-amino-acid chain; its full sequence is Elongation factor P--(R)-beta-lysine ligase (325 aa).

Position 76–78 (Ser76–Glu78) interacts with substrate. Residues Arg100–Glu102 and Asn109 contribute to the ATP site. Tyr118 contacts substrate. Glu244–Leu245 lines the ATP pocket. Residue Glu251 coordinates substrate. Gly300 is a binding site for ATP.

The protein belongs to the class-II aminoacyl-tRNA synthetase family. EpmA subfamily. As to quaternary structure, homodimer.

It catalyses the reaction D-beta-lysine + L-lysyl-[protein] + ATP = N(6)-((3R)-3,6-diaminohexanoyl)-L-lysyl-[protein] + AMP + diphosphate + H(+). Functionally, with EpmB is involved in the beta-lysylation step of the post-translational modification of translation elongation factor P (EF-P) on 'Lys-34'. Catalyzes the ATP-dependent activation of (R)-beta-lysine produced by EpmB, forming a lysyl-adenylate, from which the beta-lysyl moiety is then transferred to the epsilon-amino group of EF-P 'Lys-34'. The protein is Elongation factor P--(R)-beta-lysine ligase of Salmonella typhi.